A 178-amino-acid polypeptide reads, in one-letter code: Acireductone dioxygenase (178 aa).

The interval 1–22 (MKAYWYDNKPGDQREPHDSGRP) is disordered. Positions 9 to 22 (KPGDQREPHDSGRP) are enriched in basic and acidic residues. His-81, His-83, Glu-87, and His-126 together coordinate Fe(2+). Residues His-81, His-83, Glu-87, and His-126 each contribute to the Ni(2+) site.

Belongs to the acireductone dioxygenase (ARD) family. Fe(2+) serves as cofactor. Requires Ni(2+) as cofactor.

It is found in the cytoplasm. Its subcellular location is the nucleus. It catalyses the reaction 1,2-dihydroxy-5-(methylsulfanyl)pent-1-en-3-one + O2 = 4-methylsulfanyl-2-oxobutanoate + formate + 2 H(+). The enzyme catalyses 1,2-dihydroxy-5-(methylsulfanyl)pent-1-en-3-one + O2 = 3-(methylsulfanyl)propanoate + CO + formate + 2 H(+). Its pathway is amino-acid biosynthesis; L-methionine biosynthesis via salvage pathway; L-methionine from S-methyl-5-thio-alpha-D-ribose 1-phosphate: step 5/6. Functionally, catalyzes 2 different reactions between oxygen and the acireductone 1,2-dihydroxy-3-keto-5-methylthiopentene (DHK-MTPene) depending upon the metal bound in the active site. Fe-containing acireductone dioxygenase (Fe-ARD) produces formate and 2-keto-4-methylthiobutyrate (KMTB), the alpha-ketoacid precursor of methionine in the methionine recycle pathway. Ni-containing acireductone dioxygenase (Ni-ARD) produces methylthiopropionate, carbon monoxide and formate, and does not lie on the methionine recycle pathway. The polypeptide is Acireductone dioxygenase (adi1) (Emericella nidulans (strain FGSC A4 / ATCC 38163 / CBS 112.46 / NRRL 194 / M139) (Aspergillus nidulans)).